Consider the following 60-residue polypeptide: Large ribosomal subunit protein uL29 (60 aa).

This sequence belongs to the universal ribosomal protein uL29 family.

The chain is Large ribosomal subunit protein uL29 from Fusobacterium nucleatum subsp. nucleatum (strain ATCC 25586 / DSM 15643 / BCRC 10681 / CIP 101130 / JCM 8532 / KCTC 2640 / LMG 13131 / VPI 4355).